The chain runs to 379 residues: L-lactate dehydrogenase (379 aa).

In terms of domain architecture, FMN hydroxy acid dehydrogenase spans 1–379; that stretch reads MIISASTDYR…IGRDSLVSLP (379 aa). Tyr-24 is a substrate binding site. The FMN site is built by Ser-106 and Gln-127. Tyr-129 lines the substrate pocket. Thr-155 serves as a coordination point for FMN. Residue Arg-164 participates in substrate binding. Lys-251 is a binding site for FMN. The active-site Proton acceptor is the His-275. Residue Arg-278 coordinates substrate. 306–330 contacts FMN; that stretch reads DSGIRTGLDVVRMLALGADTVLLGR.

The protein belongs to the FMN-dependent alpha-hydroxy acid dehydrogenase family. It depends on FMN as a cofactor.

It is found in the cell inner membrane. It carries out the reaction (S)-lactate + A = pyruvate + AH2. In terms of biological role, catalyzes the conversion of L-lactate to pyruvate. Is coupled to the respiratory chain. The sequence is that of L-lactate dehydrogenase from Stenotrophomonas maltophilia (strain K279a).